An 834-amino-acid polypeptide reads, in one-letter code: Protein ROOT HAIR DEFECTIVE 3 homolog 2 (834 aa).

The Cytoplasmic portion of the chain corresponds to 1-683 (MGENDDGCST…EAHKRNNNWL (683 aa)). A GB1/RHD3-type G domain is found at 37–252 (GLSYAVVAIM…ISPGGLAGDR (216 aa)). Position 47–54 (47–54 (GPQSSGKS)) interacts with GTP. Residues 214–241 (MIVALSSYEEKEKQFEQEVAELRQRFFH) are a coiled coil. A helical membrane pass occupies residues 684–704 (PPAWAIVLMIVLGFNEFMMLL). At 705–707 (KNP) the chain is on the lumenal side. The chain crosses the membrane as a helical span at residues 708–728 (LYLLGFFVAFLLSKALWVQLD). Residues 729 to 834 (IPREFQHGAV…NVQESEISQM (106 aa)) are Cytoplasmic-facing. Over residues 767 to 783 (TTQEVPDLSASQTYRQQ) the composition is skewed to polar residues. The interval 767–834 (TTQEVPDLSA…NVQESEISQM (68 aa)) is disordered. Over residues 784-803 (SPSHSISSTISESVASNISS) the composition is skewed to low complexity. Over residues 823–834 (TNNVQESEISQM) the composition is skewed to polar residues.

The protein belongs to the TRAFAC class dynamin-like GTPase superfamily. GB1/RHD3 GTPase family. RHD3 subfamily. As to expression, expressed in roots, leaves, stems and flowers.

It localises to the endoplasmic reticulum membrane. In terms of biological role, probable GTP-binding protein that may be involved in cell development. This Arabidopsis thaliana (Mouse-ear cress) protein is Protein ROOT HAIR DEFECTIVE 3 homolog 2.